The sequence spans 61 residues: Small ribosomal subunit protein uS14 (61 aa).

Positions 24, 27, 40, and 43 each coordinate Zn(2+).

Belongs to the universal ribosomal protein uS14 family. Zinc-binding uS14 subfamily. Part of the 30S ribosomal subunit. Contacts proteins S3 and S10. The cofactor is Zn(2+).

Binds 16S rRNA, required for the assembly of 30S particles and may also be responsible for determining the conformation of the 16S rRNA at the A site. In Mycoplasmoides gallisepticum (strain R(low / passage 15 / clone 2)) (Mycoplasma gallisepticum), this protein is Small ribosomal subunit protein uS14.